A 205-amino-acid polypeptide reads, in one-letter code: LexA repressor (205 aa).

Residues 28 to 48 (RAELMRAFDFRSPNAAESHLR) constitute a DNA-binding region (H-T-H motif). Catalysis depends on for autocatalytic cleavage activity residues Ser120 and Lys159.

This sequence belongs to the peptidase S24 family. As to quaternary structure, homodimer.

The catalysed reaction is Hydrolysis of Ala-|-Gly bond in repressor LexA.. Functionally, represses a number of genes involved in the response to DNA damage (SOS response), including recA and lexA. In the presence of single-stranded DNA, RecA interacts with LexA causing an autocatalytic cleavage which disrupts the DNA-binding part of LexA, leading to derepression of the SOS regulon and eventually DNA repair. The chain is LexA repressor from Acidithiobacillus ferrooxidans (strain ATCC 23270 / DSM 14882 / CIP 104768 / NCIMB 8455) (Ferrobacillus ferrooxidans (strain ATCC 23270)).